Consider the following 234-residue polypeptide: UPF0173 metal-dependent hydrolase Rleg2_1519 (234 aa).

This sequence belongs to the UPF0173 family.

This is UPF0173 metal-dependent hydrolase Rleg2_1519 from Rhizobium leguminosarum bv. trifolii (strain WSM2304).